Consider the following 399-residue polypeptide: Odorant receptor 42b (399 aa).

Residues 1–45 (MVFELIRPAPLTEQKRSRDGCIYLYRAMKFIGWLPPKQGVLRYVY) lie on the Cytoplasmic side of the membrane. A helical membrane pass occupies residues 46-66 (LTWTLMTFVWCTTYLPLGFLG). Over 67 to 83 (SYMTQIKSFSPGEFLTS) the chain is Extracellular. The chain crosses the membrane as a helical span at residues 84 to 104 (LQVCINAYGSSVKVAITYSML). Residues 105 to 140 (WRLIKAKNILDQLDLRCTAMEEREKIHLVVARSNHA) are Cytoplasmic-facing. A helical transmembrane segment spans residues 141–161 (FLIFTFVYCGYAGSTYLSSVL). Topologically, residues 162-178 (SGRPPWQLYNPFIDWHD) are extracellular. Residues 179 to 199 (GTLKLWVASTLEYMVMSGAVL) form a helical membrane-spanning segment. Residues 200 to 268 (QDQLSDSYPL…AIIKPVIQGT (69 aa)) lie on the Cytoplasmic side of the membrane. The chain crosses the membrane as a helical span at residues 269-289 (IFTQFLLIGLVLGFTLINVFF). The Extracellular segment spans residues 290-292 (FSD). A helical membrane pass occupies residues 293–313 (IWTGIASFMFVITILLQTFPF). Topologically, residues 314–356 (CYTCNLIMEDCESLTHAIFQSNWVDASRRYKTTLLYFLQNVQQ) are cytoplasmic. A helical membrane pass occupies residues 357 to 377 (PIVFIAGGIFQISMSSNISVA). The Extracellular portion of the chain corresponds to 378-399 (KFAFSVITITKQMNIADKFKTD).

Belongs to the insect chemoreceptor superfamily. Heteromeric odorant receptor channel (TC 1.A.69) family. Or2a subfamily. As to quaternary structure, interacts with Orco. Complexes exist early in the endomembrane system in olfactory sensory neurons (OSNs), coupling these complexes to the conserved ciliary trafficking pathway. As to expression, expressed in olfactory sensory neurons in the antenna.

The protein localises to the cell membrane. Odorant receptor which mediates acceptance or avoidance behavior, depending on its substrates. The odorant receptor repertoire encodes a large collection of odor stimuli that vary widely in identity, intensity, and duration. May form a complex with Orco to form odorant-sensing units, providing sensitive and prolonged odorant signaling and calcium permeability. Involved in the behavioral responses to ethyl acetate and pentyl acetate. The chain is Odorant receptor 42b (Or42b) from Drosophila melanogaster (Fruit fly).